The sequence spans 316 residues: Ribosomal RNA small subunit methyltransferase H (316 aa).

S-adenosyl-L-methionine is bound by residues 35–37, Asp55, Phe84, Asp105, and Gln112; that span reads AGH.

This sequence belongs to the methyltransferase superfamily. RsmH family.

Its subcellular location is the cytoplasm. It carries out the reaction cytidine(1402) in 16S rRNA + S-adenosyl-L-methionine = N(4)-methylcytidine(1402) in 16S rRNA + S-adenosyl-L-homocysteine + H(+). Specifically methylates the N4 position of cytidine in position 1402 (C1402) of 16S rRNA. This Streptococcus uberis (strain ATCC BAA-854 / 0140J) protein is Ribosomal RNA small subunit methyltransferase H.